A 126-amino-acid polypeptide reads, in one-letter code: CD59 glycoprotein (126 aa).

The N-terminal stretch at Met1 to Ser22 is a signal peptide. The UPAR/Ly6 domain maps to Leu23–Thr110. 5 disulfides stabilise this stretch: Cys25–Cys48, Cys28–Cys35, Cys41–Cys61, Cys67–Cys85, and Cys86–Cys91. Asn38 carries N-linked (GlcNAc...) asparagine glycosylation. Asn101 carries the GPI-anchor amidated asparagine lipid modification. Residues Gly102–Phe126 constitute a propeptide, removed in mature form.

In terms of assembly, interacts with T-cell surface antigen CD2. Post-translationally, N- and O-glycosylated.

The protein resides in the cell membrane. The protein localises to the secreted. In terms of biological role, potent inhibitor of the complement membrane attack complex (MAC) action, which protects self-cells from damage during complement activation. Acts by binding to the beta-haipins of C8 (C8A and C8B) components of the assembling MAC, forming an intermolecular beta-sheet that prevents incorporation of the multiple copies of C9 required for complete formation of the osmolytic pore. The sequence is that of CD59 glycoprotein from Rattus norvegicus (Rat).